The sequence spans 59 residues: UPF0434 protein SO_2800 (59 aa).

Belongs to the UPF0434 family.

This is UPF0434 protein SO_2800 from Shewanella oneidensis (strain ATCC 700550 / JCM 31522 / CIP 106686 / LMG 19005 / NCIMB 14063 / MR-1).